We begin with the raw amino-acid sequence, 365 residues long: Paraneoplastic antigen Ma2 homolog (365 aa).

Residue Ala2 is modified to N-acetylalanine. Positions 336–365 (EEEDAYFEQESREEPGEREGSGCWNNSRNN) are disordered. Residues 344–355 (QESREEPGEREG) are compositionally biased toward basic and acidic residues.

It belongs to the PNMA family. As to expression, expressed in the cerebrum, cerebellum and testis.

The protein localises to the nucleus. Its subcellular location is the nucleolus. The protein is Paraneoplastic antigen Ma2 homolog (Pnma2) of Mus musculus (Mouse).